The chain runs to 194 residues: Fibroblast growth factor 7 (194 aa).

The signal sequence occupies residues 1-31 (MRKWILTRILPTPLYRPCFHLVCLVGTISLA). Residues N45 and N149 are each glycosylated (N-linked (GlcNAc...) asparagine).

The protein belongs to the heparin-binding growth factors family. Interacts with FGFBP1. Interacts with FGFR2. Affinity between fibroblast growth factors (FGFs) and their receptors is increased by heparan sulfate glycosaminoglycans that function as coreceptors.

Its function is as follows. Growth factor active on keratinocytes. Possible major paracrine effector of normal epithelial cell proliferation. This chain is Fibroblast growth factor 7 (Fgf7), found in Rattus norvegicus (Rat).